Consider the following 283-residue polypeptide: MAQSTALTICGLVYSPAIGQELVRLHTSDIDELVYFSSEREFCNYLEARRNSIACLILEWGEGTPQIITYLHHSATLLPAILIFPAAPAPPPAGPHYHIAEVILTTDQLDQLNRQIEEAITGFVKLCPGCAVPPHVLFRLPALKESSNVDPQHRLSQKLKERLGYLGVYYKRDTAFFFRRMSPADKRKLLDELRSIYRTIVLEYFNTDAKVNERIDEFVSKAFFADISVSQVLEIHVELMDTFSKQLKLEGRSEDILLDYRLTLIDVIAHLCEMYRRSIPREV.

Residues 1–146 (MAQSTALTIC…LFRLPALKES (146 aa)) form a psR domain, not required to form KaiA:KaiB:KaiC complex, or for a full KaiC phosphorylation cycle region. In terms of domain architecture, KaiA N-terminal spans 3-163 (QSTALTICGL…RLSQKLKERL (161 aa)). The segment at 164-172 (GYLGVYYKR) is flexible linker. The region spanning 173 to 281 (DTAFFFRRMS…CEMYRRSIPR (109 aa)) is the KaiA C-terminal domain.

It belongs to the KaiA family. In terms of assembly, homodimer. The KaiABC complex composition changes during the circadian cycle to control KaiC phosphorylation. Complexes KaiC(6), KaiA(2-4):KaiC(6), KaiB(6):KaiC(6) and KaiC(6):KaiB(6):KaiA(12) are among the most important forms, many form cooperatively. Binds to KaiB and KaiC, the N-terminus (pseudoreceiver domain PsR) is not required for either interaction. 1 KaiB binds to one subunit of the KaiA homodimer. KaiA and CikA bind to the same region of the KaiB(fs) form and therefore compete.

In terms of biological role, key component of the KaiABC oscillator complex, which constitutes the main circadian regulator in cyanobacteria. Complex composition changes during the circadian cycle to control KaiC phosphorylation. KaiA stimulates KaiC autophosphorylation, while KaiB sequesters KaiA, leading to KaiC autodephosphorylation. KaiA binding to the KaiC CII domain during the subjective day yields KaiA(2-4):KaiC(6) complexes which stimulate KaiC autophosphorylation. Phospho-Ser-431 KaiC accumulation triggers binding of KaiB during the subjective night to form the KaiB(6):KaiC(6) complex, leading to changes in the output regulators CikA and SasA. KaiB(6):KaiC(6) formation exposes a site for KaiA binding on KaiB that sequesters KaiA from KaiC's CII domain, making the KaiC(6):KaiB(6):KaiA(12) complex resulting in KaiC autodephosphorylation. Complete dephosphorylation of KaiC leads to dissociation of KaiA(2):KaiB(1), completing 1 cycle of the Kai oscillator. Formation of the KaiB:KaiC complex is promoted by KaiA, helping switch KaiC from its autophosphorylation to autodephosphatase function. Its function is as follows. Binds oxidized quinones via the N-terminal PsR domain, allowing it to sense redox changes and possibly mediate clock input. This is Circadian clock oscillator protein KaiA from Thermosynechococcus vestitus (strain NIES-2133 / IAM M-273 / BP-1).